Reading from the N-terminus, the 130-residue chain is Large ribosomal subunit protein bL17 (130 aa).

It belongs to the bacterial ribosomal protein bL17 family. In terms of assembly, part of the 50S ribosomal subunit. Contacts protein L32.

In Shewanella loihica (strain ATCC BAA-1088 / PV-4), this protein is Large ribosomal subunit protein bL17.